The primary structure comprises 69 residues: Bacteriocin microcin B17 (69 aa).

Residues 1–26 (MELKASEFGVVLSVDALKLSRQSPLG) constitute a propeptide that is removed on maturation. The segment at residues 39 to 40 (GS) is a cross-link (oxazole-4-carboxylic acid (Gly-Ser)). The segment at residues 40–41 (SC) is a cross-link (thiazole-4-carboxylic acid (Ser-Cys)). 3 consecutive cross-links (thiazole-4-carboxylic acid (Gly-Cys)) follow at residues 47–48 (GC), 50–51 (GC), and 54–55 (GC). The oxazole-4-carboxylic acid (Cys-Ser) cross-link spans 55–56 (CS). 2 cross-links (oxazole-4-carboxylic acid (Gly-Ser)) span residues 61 to 62 (GS) and 64 to 65 (GS).

The processed N-terminus does not resemble a typical secretion signal sequence. Post-translationally, maturation of thiazole and oxazole containing antibiotics involves the enzymatic condensation of a Cys, Ser or Thr with the alpha-carbonyl of the preceding amino acid to form a thioether or ether bond, then dehydration to form a double bond with the alpha-amino nitrogen. Thiazoline or oxazoline rings are dehydrogenated to form thiazole or oxazole rings.

In terms of biological role, this glycine-rich peptide antibiotic inhibits DNA replication in many enteric bacteria, that leads to induction of the SOS repair system, massive DNA degradation and cell death. B17 inhibits type II topoisomerase by trapping an enzyme - DNA cleavable complex. This Escherichia coli protein is Bacteriocin microcin B17 (mcbA).